Here is a 231-residue protein sequence, read N- to C-terminus: Orotidine 5'-phosphate decarboxylase (231 aa).

Substrate-binding positions include D11, K33, 60-69 (DLKFHDIPNT), T120, R181, Q190, G210, and R211. The Proton donor role is filled by K62.

Belongs to the OMP decarboxylase family. Type 1 subfamily. Homodimer.

The enzyme catalyses orotidine 5'-phosphate + H(+) = UMP + CO2. The protein operates within pyrimidine metabolism; UMP biosynthesis via de novo pathway; UMP from orotate: step 2/2. Catalyzes the decarboxylation of orotidine 5'-monophosphate (OMP) to uridine 5'-monophosphate (UMP). This chain is Orotidine 5'-phosphate decarboxylase, found in Pseudoalteromonas atlantica (strain T6c / ATCC BAA-1087).